Here is a 91-residue protein sequence, read N- to C-terminus: Bombyxin B-1 homolog (91 aa).

The N-terminal stretch at 1–19 is a signal peptide; that stretch reads MKVSMFVVIVLCMVAASSA. 3 disulfide bridges follow: Cys27–Cys78, Cys39–Cys91, and Cys77–Cys82. Positions 49–69 are cleaved as a propeptide — c peptide like; the sequence is SGAQYARYGWQSPESREGARG.

Belongs to the insulin family. Heterodimer of a B chain and an A chain linked by two disulfide bonds.

It is found in the secreted. Brain peptide responsible for activation of prothoracic glands to produce ecdysone in insects. This is Bombyxin B-1 homolog (SBXB1) from Samia cynthia (Ailanthus silkmoth).